The chain runs to 509 residues: Otolin-1 (509 aa).

A signal peptide spans 1–25; sequence MPSLRLLAILTTLLAVVLMATQSSA. Positions 23-96 are disordered; the sequence is SSATRTTRRP…AYSLSPTDST (74 aa). Gly residues predominate over residues 42–54; the sequence is RGGGTGGGGGGGD. Residues 62-75 are compositionally biased toward polar residues; the sequence is RQTTTTMSPSSSLG. Asn121 is a glycosylation site (N-linked (GlcNAc...) asparagine). Residues 193–244 enclose the Collagen-like 1 domain; sequence GDKGDQGDTGMPGAPGILGKEGQKGDLGPKGEKGETGLPGLKGDLGERGKPG. Positions 202-372 are disordered; that stretch reads GMPGAPGILG…GPKGPQGETA (171 aa). The span at 213 to 227 shows a compositional bias: basic and acidic residues; sequence EGQKGDLGPKGEKGE. N-linked (GlcNAc...) asparagine glycosylation is found at Asn246 and Asn311. Residues 285–329 form the Collagen-like 2 domain; it reads GEKGEKGEAGLPGPPGPRGSVGPPGVNGSNGLPGPVGLRGQLGSP. Residues 302–322 are compositionally biased toward low complexity; sequence RGSVGPPGVNGSNGLPGPVGL. Gly residues predominate over residues 327-342; sequence GSPGGKGEAGGRGPPG. The region spanning 372-509 is the C1q domain; the sequence is AEQIRSAFSV…GFLLYADPKA (138 aa). A glycan (N-linked (GlcNAc...) asparagine) is linked at Asn417.

The protein belongs to the OTOL1 family. Homooligomer; disulfide-linked; probably forms homotrimers. Interacts with otomp.

It is found in the secreted. It localises to the extracellular space. The protein resides in the extracellular matrix. Functionally, collagen-like protein, which provides an organic scaffold for otoliths onto the sensory epithelium of the inner ear. Acts as a scaffold for biomineralization by sequestering calcium. The sequence is that of Otolin-1 (Otol1) from Oncorhynchus mykiss (Rainbow trout).